The chain runs to 151 residues: Caveolin-3 (151 aa).

Residues 1–83 are Cytoplasmic-facing; that stretch reads MMAEEHTDLE…RLLSTLLGVP (83 aa). Lys38 is covalently cross-linked (Glycyl lysine isopeptide (Lys-Gly) (interchain with G-Cter in SUMO3)). The interval 64–114 is required for interaction with DAG1; sequence TFTVSKYWCYRLLSTLLGVPLALLWGFLFACISFCHIWAVVPCIKSYLIEI. An intramembrane region (helical) is located at residues 84–104; it reads LALLWGFLFACISFCHIWAVV. The Cytoplasmic segment spans residues 105–151; it reads PCIKSYLIEIQCISHIYSLCIRTFCNPLFAALGQVCSSIKVVLRKEV.

The protein belongs to the caveolin family. In terms of assembly, homooligomer. Interacts with DLG1 and KCNA5; forms a ternary complex. Interacts with TRIM72. Interacts with MUSK; may regulate MUSK signaling. Interacts with DAG1 (via its C-terminal); the interaction prevents binding of DAG1 with DMD. Interacts with DYSF. Interacts with POPDC1. Interacts with CAVIN1 and CAVIN2. Interacts with CAVIN4. Sumoylation with SUMO3 by PIAS4 may reduce agonist-induced internalization and desensitization of adrenergic receptor ABRD2. In terms of tissue distribution, expressed predominantly in muscle.

The protein resides in the golgi apparatus membrane. It localises to the cell membrane. The protein localises to the membrane. It is found in the caveola. Its subcellular location is the sarcolemma. Functionally, may act as a scaffolding protein within caveolar membranes. Interacts directly with G-protein alpha subunits and can functionally regulate their activity. May also regulate voltage-gated potassium channels. Plays a role in the sarcolemma repair mechanism of both skeletal muscle and cardiomyocytes that permits rapid resealing of membranes disrupted by mechanical stress. Mediates the recruitment of CAVIN2 and CAVIN3 proteins to the caveolae. This chain is Caveolin-3 (CAV3), found in Homo sapiens (Human).